The sequence spans 190 residues: Putative transcription factor ovo-like protein 3 (190 aa).

Disordered stretches follow at residues 1-21 and 35-65; these read MPRA…GHLP and SLGG…SAPR. Polar residues predominate over residues 41–62; it reads AQQSSSVRDPWTAQPTQGNLTS. 4 consecutive C2H2-type zinc fingers follow at residues 70 to 92, 98 to 120, 126 to 149, and 165 to 187; these read LGCP…LKCH, HLCR…MRTH, FRCS…AKVH, and HVCE…RALH.

It belongs to the krueppel C2H2-type zinc-finger protein family.

It is found in the nucleus. Functionally, may act as a transcription regulator. In Homo sapiens (Human), this protein is Putative transcription factor ovo-like protein 3 (OVOL3).